We begin with the raw amino-acid sequence, 141 residues long: uncharacterized protein (141 aa).

Positions 24–52 (KVQTALQKEAKTIKREQKKIKDEIDTFKT) form a coiled coil.

This is an uncharacterized protein from Invertebrate iridescent virus 6 (IIV-6).